Consider the following 921-residue polypeptide: MVSALLLRARQNGRAARCLDYPKVKCWALASLPKSSLEKPGFSQVRRFSVFHPQSQVNLDLTRNIGIIAHIDAGKTTTTERMLYYSGLTRRIGDVDEGSTVTDFLPAERARGITIQSAAITFHWPPAECGNATRQDPRSPRSASSHMVNLIDTPGHADFTFEVLRSLRILDGAVCILDGVAGVEAQTEQVWHQASTYNIPRIVYVNKMDRDGAAFGRTVREVASRLGGWPAVCQIPWFEGGDGRFVGVADAINLQGLLWSGGDGKSVKRFSLSELDEAESQLAQELRRARVALVELLSEHDEIIVEKFFENEEDHLSVSPADILDSLRRCLLEGNGRKIIPIFAGASFRNIGVQPLLDSVVDLLPSPQETPDPEVAIGGVKGSLRRLLSGDLLVEQKEKAAPKGKQKKKAAVVADSRNAIKQLHGCGLAFKVVNDAKRGVLVYVRVYSGSLDRGSLLYNTNLNVSERAPRLLKMYANDAVEVDSISEGQIGVVVGLKHARTGDTLVACTTNKATPPEPLDTLQLRPIDVPPPVFFASVEPHSLAEEKRMHESLALLLREDPSLHVSIDEDSGQTLLSGMGELHLEIARDRLINDLKAKATMGPIEIGYRECPLGASGPVTKIFDREIAGRKGKAGCTAEIEPFDPETSPAPDPAALSVEIANGNQIVILAPELQIETNKKGLEESPILPPGLDVDAVRSALSNGCLAALARGPQFTFPMHSTRVTLTLSPTAHIFGNETTSASLSAATRLATSTALSNLISNPASASATPGTCLMEPLMNVIISVDEASLGAVVHDISSSRGGHIVSLDEDVPIASTDLSIPNTETPDPELDLPPIDPAKVYAPPDPFQSSTVVGGSMASDARNRPRTITAKVPLKEMVGYLKHLRSLSAGRGTFVMSVDRFEKMSPPRQKAVLTELRGVY.

Residues 1–55 (MVSALLLRARQNGRAARCLDYPKVKCWALASLPKSSLEKPGFSQVRRFSVFHPQS) constitute a mitochondrion transit peptide. In terms of domain architecture, tr-type G spans 60-368 (DLTRNIGIIA…SVVDLLPSPQ (309 aa)). Residues 69–76 (AHIDAGKT), 152–156 (DTPGH), and 206–209 (NKMD) contribute to the GTP site.

This sequence belongs to the TRAFAC class translation factor GTPase superfamily. Classic translation factor GTPase family. EF-G/EF-2 subfamily.

The protein resides in the mitochondrion. Functionally, mitochondrial GTPase that mediates the disassembly of ribosomes from messenger RNA at the termination of mitochondrial protein biosynthesis. Not involved in the GTP-dependent ribosomal translocation step during translation elongation. The chain is Ribosome-releasing factor 2, mitochondrial (mef2) from Emericella nidulans (strain FGSC A4 / ATCC 38163 / CBS 112.46 / NRRL 194 / M139) (Aspergillus nidulans).